The primary structure comprises 103 residues: MNLNKYETIYILQPNITESENLILINEYKALIKKYGGNNIVVQHKGRRHLNYNIKSYYDGIYVQINYTASSNLVRILEKAMRLSQHVIRYMTIKNCHMNDIKI.

It belongs to the bacterial ribosomal protein bS6 family.

Its subcellular location is the plastid. The protein resides in the chloroplast. In terms of biological role, binds together with bS18 to 16S ribosomal RNA. This Gracilaria tenuistipitata var. liui (Red alga) protein is Small ribosomal subunit protein bS6c.